We begin with the raw amino-acid sequence, 168 residues long: Diphosphoinositol polyphosphate phosphohydrolase 1 (168 aa).

The residue at position 1 (M1) is an N-acetylmethionine. Substrate is bound by residues R10, 18-20 (KKR), and 39-41 (SSR). A Nudix hydrolase domain is found at 17–144 (YKKRAACLCF…VQASYFETLR (128 aa)). G50 and E66 together coordinate Mg(2+). Positions 51–72 (GGMEPEEEPSVAAVREVCEEAG) match the Nudix box motif. Catalysis depends on E69, which acts as the Proton acceptor. Mg(2+) is bound at residue E70. Substrate-binding positions include 89-91 (RKH), R115, and K133.

The protein belongs to the Nudix hydrolase family. DIPP subfamily. As to quaternary structure, monomer. Requires Mg(2+) as cofactor. It depends on Mn(2+) as a cofactor. The cofactor is Zn(2+). As to expression, present in heart, lung, liver and spleen (at protein level). Widely expressed.

The protein resides in the cytoplasm. Its subcellular location is the nucleus. It carries out the reaction diphospho-myo-inositol polyphosphate + H2O = myo-inositol polyphosphate + phosphate.. The catalysed reaction is 5-diphospho-1D-myo-inositol 1,2,3,4,6-pentakisphosphate + H2O = 1D-myo-inositol hexakisphosphate + phosphate + H(+). It catalyses the reaction 3,5-bis(diphospho)-1D-myo-inositol 1,2,4,6-tetrakisphosphate + H2O = 3-diphospho-1D-myo-inositol 1,2,4,5,6-pentakisphosphate + phosphate + 2 H(+). The enzyme catalyses [phosphate](n+1) + n H2O = (n+1) phosphate + n H(+). It carries out the reaction P(1),P(5)-bis(5'-adenosyl) pentaphosphate + H2O = ADP + ATP + 2 H(+). The catalysed reaction is P(1),P(6)-bis(5'-adenosyl) hexaphosphate + H2O = 2 ATP + 2 H(+). It catalyses the reaction P(1),P(4)-bis(5'-adenosyl) tetraphosphate + H2O = AMP + ATP + 2 H(+). The enzyme catalyses a 5'-end (N(7)-methyl 5'-triphosphoguanosine)-ribonucleoside in mRNA + H2O = N(7)-methyl-GMP + a 5'-end diphospho-ribonucleoside in mRNA + 2 H(+). It carries out the reaction a 5'-end (N(7)-methyl 5'-triphosphoguanosine)-ribonucleoside in mRNA + H2O = N(7)-methyl-GDP + a 5'-end phospho-ribonucleoside in mRNA + 2 H(+). Functionally, cleaves a beta-phosphate from the diphosphate groups in PP-InsP5 (diphosphoinositol pentakisphosphate) and [PP]2-InsP4 (bisdiphosphoinositol tetrakisphosphate), suggesting that it may play a role in signal transduction. InsP6 (inositol hexakisphosphate) is not a substrate. Also able to catalyze the hydrolysis of dinucleoside oligophosphates, with diadenosine 5',5'''-P1,P6-hexaphosphate (Ap6A) and diadenosine 5',5'''- P1,P5-pentaphosphate (Ap5A) being the preferred substrates. The major reaction products are ADP and p4a from Ap6A and ADP and ATP from Ap5A. Also able to hydrolyze 5- phosphoribose 1-diphosphate. Acts as a negative regulator of the ERK1/2 pathway. Acts as a decapping enzyme that can hydrolyze both monomethylated and unmethylated capped RNAs. Hydrolyzes monomethylated capped RNA after both the alpha- and beta-phosphates generating m7GMP + ppRNA and m7GDP + pRNA. Modulates the stability of a subset of mRNAs implicated in cell motility. Divalent cations zinc, magnesium and manganese determine its substrate specificity. Exhibits diphosphoinositol polyphosphate phosphohydrolase in the presence of magnesium ions, diadenosine hexaphosphate hydrolase activity in the presence of manganese ions and endopolyphosphatase activity in the presence of zinc ions. Plays an important role in limiting DNA damage and maintaining cell survival upon oxidative stress via its endopolyphosphatase activity. This Mus musculus (Mouse) protein is Diphosphoinositol polyphosphate phosphohydrolase 1.